Here is a 45-residue protein sequence, read N- to C-terminus: Large ribosomal subunit protein bL34 (45 aa).

Basic residues-rich tracts occupy residues 1 to 15 and 22 to 45; these read MKAKSHLSNKKRKRA and MKTKAGRKILARRRAKGRKRIAIK. Positions 1 to 45 are disordered; it reads MKAKSHLSNKKRKRASGFLARMKTKAGRKILARRRAKGRKRIAIK.

It belongs to the bacterial ribosomal protein bL34 family.

This Sulfurihydrogenibium sp. (strain YO3AOP1) protein is Large ribosomal subunit protein bL34.